We begin with the raw amino-acid sequence, 119 residues long: Hemerythrin subunit A (119 aa).

The Fe cation site is built by His-26, His-55, Glu-59, His-74, His-78, His-107, and Asp-112.

Belongs to the hemerythrin family.

Hemerythrin is a respiratory protein in blood cells of certain marine worms. The oxygen-binding site in each chain contains two iron atoms. The polypeptide is Hemerythrin subunit A (Sipunculus nudus (Sipunculan worm)).